We begin with the raw amino-acid sequence, 217 residues long: Probable transaldolase (217 aa).

Lysine 83 (schiff-base intermediate with substrate) is an active-site residue.

This sequence belongs to the transaldolase family. Type 3B subfamily.

It is found in the cytoplasm. It catalyses the reaction D-sedoheptulose 7-phosphate + D-glyceraldehyde 3-phosphate = D-erythrose 4-phosphate + beta-D-fructose 6-phosphate. It functions in the pathway carbohydrate degradation; pentose phosphate pathway; D-glyceraldehyde 3-phosphate and beta-D-fructose 6-phosphate from D-ribose 5-phosphate and D-xylulose 5-phosphate (non-oxidative stage): step 2/3. In terms of biological role, transaldolase is important for the balance of metabolites in the pentose-phosphate pathway. This chain is Probable transaldolase, found in Caldicellulosiruptor saccharolyticus (strain ATCC 43494 / DSM 8903 / Tp8T 6331).